Here is a 473-residue protein sequence, read N- to C-terminus: Deoxyribodipyrimidine photo-lyase (473 aa).

The Photolyase/cryptochrome alpha/beta domain maps to P2 to I134. (6R)-5,10-methylene-5,6,7,8-tetrahydrofolate contacts are provided by N109 and E110. Y224 lines the FAD pocket. Residue R228 participates in DNA binding. T236–S240 is an FAD binding site. 2 interaction with DNA regions span residues E276–Y283 and N343–R344. An FAD-binding site is contributed by D374–D376. DNA is bound at residue Q406.

It belongs to the DNA photolyase class-1 family. Monomer. It depends on FAD as a cofactor. (6R)-5,10-methylene-5,6,7,8-tetrahydrofolate is required as a cofactor.

The enzyme catalyses cyclobutadipyrimidine (in DNA) = 2 pyrimidine residues (in DNA).. In terms of biological role, involved in repair of UV radiation-induced DNA damage. Catalyzes the light-dependent monomerization (300-600 nm) of cyclobutyl pyrimidine dimers (in cis-syn configuration), which are formed between adjacent bases on the same DNA strand upon exposure to ultraviolet radiation. The sequence is that of Deoxyribodipyrimidine photo-lyase (phrB) from Salmonella typhimurium (strain LT2 / SGSC1412 / ATCC 700720).